The chain runs to 581 residues: mRNA-decapping enzyme 1B (581 aa).

S145 bears the Phosphoserine mark. Disordered stretches follow at residues 181–222 (QISS…PEPQ) and 236–258 (APCQ…PEKF). Over residues 204–219 (GSRQQRGPRPGQTSDP) the composition is skewed to polar residues. The span at 244–255 (PPQTLPLQQQQP) shows a compositional bias: low complexity. A phosphoserine mark is found at S269 and S326. Positions 349–411 (AENRCEPGAP…HQPVTGPGEV (63 aa)) are disordered. Positions 355–367 (PGAPAPASSATTP) are enriched in low complexity. At T366 the chain carries Phosphothreonine. The segment covering 368 to 381 (VSLAQPTRLSSALP) has biased composition (polar residues). Residues 382–401 (PQTPGPRALPRPAPPGPGPG) are compositionally biased toward pro residues. Residue S412 is modified to Phosphoserine. A disordered region spans residues 427 to 468 (QQLPAPGRPALAAKFPTATLSTRARNPLEPWRDPPPSTEQPA). S475 is subject to Phosphoserine. Residues 498 to 522 (SWAPPQERSRAPLPPGNQDPAATPT) form a disordered region.

The protein belongs to the DCP1 family. In terms of assembly, interacts with DCP1A.

The protein resides in the cytoplasm. The protein localises to the nucleus. It carries out the reaction a 5'-end (N(7)-methyl 5'-triphosphoguanosine)-ribonucleoside in mRNA + H2O = N(7)-methyl-GDP + a 5'-end phospho-ribonucleoside in mRNA + 2 H(+). May play a role in the degradation of mRNAs, both in normal mRNA turnover and in nonsense-mediated mRNA decay. May remove the 7-methyl guanine cap structure from mRNA molecules, yielding a 5'-phosphorylated mRNA fragment and 7m-GDP. This chain is mRNA-decapping enzyme 1B (DCP1B), found in Bos taurus (Bovine).